Here is an 81-residue protein sequence, read N- to C-terminus: Cytochrome b559 subunit alpha (81 aa).

A helical transmembrane segment spans residues 21-35 (VIHSITIPALFIAGW). H23 contributes to the heme binding site.

It belongs to the PsbE/PsbF family. In terms of assembly, heterodimer of an alpha subunit and a beta subunit. PSII is composed of 1 copy each of membrane proteins PsbA, PsbB, PsbC, PsbD, PsbE, PsbF, PsbH, PsbI, PsbJ, PsbK, PsbL, PsbM, PsbT, PsbX, PsbY, PsbZ, Psb30/Ycf12, at least 3 peripheral proteins of the oxygen-evolving complex and a large number of cofactors. It forms dimeric complexes. It depends on heme b as a cofactor.

It localises to the plastid. It is found in the chloroplast thylakoid membrane. This b-type cytochrome is tightly associated with the reaction center of photosystem II (PSII). PSII is a light-driven water:plastoquinone oxidoreductase that uses light energy to abstract electrons from H(2)O, generating O(2) and a proton gradient subsequently used for ATP formation. It consists of a core antenna complex that captures photons, and an electron transfer chain that converts photonic excitation into a charge separation. In Tetradesmus obliquus (Green alga), this protein is Cytochrome b559 subunit alpha.